The primary structure comprises 58 residues: Large ribosomal subunit protein bL32 (58 aa).

Disordered regions lie at residues 1 to 22 (MAVP…HWKR) and 39 to 58 (LSGR…DDEE).

This sequence belongs to the bacterial ribosomal protein bL32 family.

The chain is Large ribosomal subunit protein bL32 from Crocosphaera subtropica (strain ATCC 51142 / BH68) (Cyanothece sp. (strain ATCC 51142)).